The following is a 323-amino-acid chain: MFNFANFYQLIAQDTRLQPWLNVLPQQLTDWQNAEHGDFGRWLKALNKIPQGAPNQVDIKNSVTISNDTPFHEGELKKLESLLRTFHPWRKGPYTVHGIHIDTEWRSDWKWDRVLPHISPLKNRSVLDVGCGNGYHMWRMLGEGARLTVGIDPSHLFLIQFEAIRKLMGDDQRAHLLPLGIEQLPKLEAFDTVFSMGVLYHRRSPLDHLVQLKDQLVSGGELVLETLVIEGDENAVLVPTSRYAQMRNVYFFPSAKALKVWLELVGFKDVRIVDENVTTVGEQRTTDWMTHNSLPDYLDPNDPSKTVEGYPAPRRAVLVATKP.

Carboxy-S-adenosyl-L-methionine-binding positions include lysine 91, tryptophan 105, lysine 110, glycine 130, 152 to 154, 181 to 182, methionine 196, tyrosine 200, and arginine 315; these read DPS and IE.

It belongs to the class I-like SAM-binding methyltransferase superfamily. CmoB family. As to quaternary structure, homotetramer.

It carries out the reaction carboxy-S-adenosyl-L-methionine + 5-hydroxyuridine(34) in tRNA = 5-carboxymethoxyuridine(34) in tRNA + S-adenosyl-L-homocysteine + H(+). Functionally, catalyzes carboxymethyl transfer from carboxy-S-adenosyl-L-methionine (Cx-SAM) to 5-hydroxyuridine (ho5U) to form 5-carboxymethoxyuridine (cmo5U) at position 34 in tRNAs. This Vibrio campbellii (strain ATCC BAA-1116) protein is tRNA U34 carboxymethyltransferase.